A 503-amino-acid polypeptide reads, in one-letter code: Aspartyl/glutamyl-tRNA(Asn/Gln) amidotransferase subunit B (503 aa).

The protein belongs to the GatB/GatE family. GatB subfamily. As to quaternary structure, heterotrimer of A, B and C subunits.

The enzyme catalyses L-glutamyl-tRNA(Gln) + L-glutamine + ATP + H2O = L-glutaminyl-tRNA(Gln) + L-glutamate + ADP + phosphate + H(+). It catalyses the reaction L-aspartyl-tRNA(Asn) + L-glutamine + ATP + H2O = L-asparaginyl-tRNA(Asn) + L-glutamate + ADP + phosphate + 2 H(+). Its function is as follows. Allows the formation of correctly charged Asn-tRNA(Asn) or Gln-tRNA(Gln) through the transamidation of misacylated Asp-tRNA(Asn) or Glu-tRNA(Gln) in organisms which lack either or both of asparaginyl-tRNA or glutaminyl-tRNA synthetases. The reaction takes place in the presence of glutamine and ATP through an activated phospho-Asp-tRNA(Asn) or phospho-Glu-tRNA(Gln). The protein is Aspartyl/glutamyl-tRNA(Asn/Gln) amidotransferase subunit B of Rhodococcus erythropolis (strain PR4 / NBRC 100887).